Reading from the N-terminus, the 257-residue chain is Thiazole synthase (257 aa).

Lys95 serves as the catalytic Schiff-base intermediate with DXP. 1-deoxy-D-xylulose 5-phosphate is bound by residues Gly156, 182 to 183 (AG), and 204 to 205 (NT).

It belongs to the ThiG family. Homotetramer. Forms heterodimers with either ThiH or ThiS.

It localises to the cytoplasm. It catalyses the reaction [ThiS sulfur-carrier protein]-C-terminal-Gly-aminoethanethioate + 2-iminoacetate + 1-deoxy-D-xylulose 5-phosphate = [ThiS sulfur-carrier protein]-C-terminal Gly-Gly + 2-[(2R,5Z)-2-carboxy-4-methylthiazol-5(2H)-ylidene]ethyl phosphate + 2 H2O + H(+). It functions in the pathway cofactor biosynthesis; thiamine diphosphate biosynthesis. In terms of biological role, catalyzes the rearrangement of 1-deoxy-D-xylulose 5-phosphate (DXP) to produce the thiazole phosphate moiety of thiamine. Sulfur is provided by the thiocarboxylate moiety of the carrier protein ThiS. In vitro, sulfur can be provided by H(2)S. The polypeptide is Thiazole synthase (Vibrio vulnificus (strain CMCP6)).